The primary structure comprises 86 residues: Large ribosomal subunit protein bL27 (86 aa).

Positions 1–21 (MAHKKGGGSSRNGRDSESKRL) are disordered.

This sequence belongs to the bacterial ribosomal protein bL27 family.

In Rubrobacter xylanophilus (strain DSM 9941 / JCM 11954 / NBRC 16129 / PRD-1), this protein is Large ribosomal subunit protein bL27.